A 432-amino-acid chain; its full sequence is Adenylosuccinate synthetase (432 aa).

GTP-binding positions include glycine 13–lysine 19 and glycine 41–threonine 43. The Proton acceptor role is filled by aspartate 14. Aspartate 14 and glycine 41 together coordinate Mg(2+). IMP contacts are provided by residues aspartate 14–lysine 17, asparagine 39–histidine 42, threonine 130, arginine 144, glutamine 225, threonine 240, and arginine 304. Histidine 42 (proton donor) is an active-site residue. Substrate is bound at residue alanine 300–arginine 306. GTP is bound by residues arginine 306, lysine 332–aspartate 334, and serine 415–glycine 417.

This sequence belongs to the adenylosuccinate synthetase family. Homodimer. Mg(2+) serves as cofactor.

It localises to the cytoplasm. The enzyme catalyses IMP + L-aspartate + GTP = N(6)-(1,2-dicarboxyethyl)-AMP + GDP + phosphate + 2 H(+). The protein operates within purine metabolism; AMP biosynthesis via de novo pathway; AMP from IMP: step 1/2. Functionally, plays an important role in the de novo pathway of purine nucleotide biosynthesis. Catalyzes the first committed step in the biosynthesis of AMP from IMP. The polypeptide is Adenylosuccinate synthetase (Yersinia enterocolitica serotype O:8 / biotype 1B (strain NCTC 13174 / 8081)).